We begin with the raw amino-acid sequence, 2314 residues long: A-kinase anchor protein 6 (2314 aa).

Residues 1–12 (MLTMSVTLSPLR) show a composition bias toward polar residues. 4 disordered regions span residues 1–25 (MLTM…DASP), 285–432 (PSSC…DPPD), 505–613 (SLCR…PCHA), and 736–755 (TDEK…HSAT). A compositionally biased stretch (basic and acidic residues) spans 301–311 (SDDHKGEHGED). Polar residues predominate over residues 319–330 (QLDSTVGMSSLD). Positions 398 to 420 (ETQKNERKGSDRKGQVVDLKPEL) are enriched in basic and acidic residues. The segment covering 569–592 (SKASSSPPCSHSSESSLGSDSIKS) has biased composition (low complexity). A compositionally biased stretch (basic and acidic residues) spans 736–753 (TDEKSERPSSSEKNESHS). 2 Spectrin repeats span residues 768–847 (QHQE…QLLE) and 1033–1148 (ILEK…LLDD). Serine 1072 carries the post-translational modification Phosphoserine. The segment at 1349–1401 (CHSGDLSQNSGSESGIVSEGDNEMPTNSDMSLFSMVDGSPSNPETEHPDPQMG) is disordered. The segment covering 1353-1363 (DLSQNSGSESG) has biased composition (polar residues). Phosphoserine is present on residues serine 1568 and serine 1593. Composition is skewed to basic and acidic residues over residues 1816–1831 (RSGV…DGGG) and 1874–1891 (GENK…HVAD). Disordered regions lie at residues 1816–1838 (RSGV…ANPS), 1854–1926 (LSEN…KTIS), and 1940–2012 (SEDS…SGAR). Positions 1917–1926 (NLASNVKTIS) are enriched in polar residues. The span at 1944–1958 (SVARKEFCPPNDRHP) shows a compositional bias: basic and acidic residues. Residues 2062-2075 (IIDMASTALKSKSQ) form a PKA-RII subunit binding domain region. The segment at 2166–2286 (EEAGLPGALP…NAKQPKGKVA (121 aa)) is disordered. A compositionally biased stretch (basic and acidic residues) spans 2215 to 2226 (GADDAKEGDDVS). Residues 2227–2243 (HTSQGCAESTEPTTPSG) show a composition bias toward polar residues.

Interacts with RII subunit of PKA, phosphatase 2B (calcineurin) and AKAP79. Interacts with SYNPO2.

Its subcellular location is the sarcoplasmic reticulum. The protein localises to the nucleus membrane. Binds to type II regulatory subunits of protein kinase A and anchors/targets them to the nuclear membrane or sarcoplasmic reticulum. May act as an adapter for assembling multiprotein complexes. The polypeptide is A-kinase anchor protein 6 (Akap6) (Rattus norvegicus (Rat)).